The following is a 254-amino-acid chain: MRTPLLAGNWKMYKTTGEARELVEGLLHGLGDVGDRKVLVCPPFTALQTVHDLVQGTPIALGAQDVYIEPQGAFTGAISPVMLRDLGCAYVIVGHSERRAIFGEGDELIGKKVRAALAHDLTPILCVGETKPQRDAGHAETVVVAQVRAALTGMTPEQIGRIVIAYEPVWAIGTGDTATPADAQAMHETIRRILGDMAGSDTAATINILYGGSVKPDNIDDLMAQPDIDGALVGGASLKADSFLRIVHFLSPQE.

9 to 11 (NWK) lines the substrate pocket. His95 (electrophile) is an active-site residue. Catalysis depends on Glu167, which acts as the Proton acceptor. Residues Gly173, Ser213, and 234 to 235 (GG) each bind substrate.

This sequence belongs to the triosephosphate isomerase family. In terms of assembly, homodimer.

Its subcellular location is the cytoplasm. It carries out the reaction D-glyceraldehyde 3-phosphate = dihydroxyacetone phosphate. It participates in carbohydrate biosynthesis; gluconeogenesis. Its pathway is carbohydrate degradation; glycolysis; D-glyceraldehyde 3-phosphate from glycerone phosphate: step 1/1. In terms of biological role, involved in the gluconeogenesis. Catalyzes stereospecifically the conversion of dihydroxyacetone phosphate (DHAP) to D-glyceraldehyde-3-phosphate (G3P). The chain is Triosephosphate isomerase from Roseiflexus castenholzii (strain DSM 13941 / HLO8).